We begin with the raw amino-acid sequence, 185 residues long: Acireductone dioxygenase (185 aa).

Residues Met-1–Leu-22 are disordered. Residues His-102, His-104, Glu-108, and His-146 each coordinate Fe(2+). Ni(2+) contacts are provided by His-102, His-104, Glu-108, and His-146.

This sequence belongs to the acireductone dioxygenase (ARD) family. In terms of assembly, monomer. Fe(2+) serves as cofactor. The cofactor is Ni(2+).

It catalyses the reaction 1,2-dihydroxy-5-(methylsulfanyl)pent-1-en-3-one + O2 = 3-(methylsulfanyl)propanoate + CO + formate + 2 H(+). The catalysed reaction is 1,2-dihydroxy-5-(methylsulfanyl)pent-1-en-3-one + O2 = 4-methylsulfanyl-2-oxobutanoate + formate + 2 H(+). The protein operates within amino-acid biosynthesis; L-methionine biosynthesis via salvage pathway; L-methionine from S-methyl-5-thio-alpha-D-ribose 1-phosphate: step 5/6. Its function is as follows. Catalyzes 2 different reactions between oxygen and the acireductone 1,2-dihydroxy-3-keto-5-methylthiopentene (DHK-MTPene) depending upon the metal bound in the active site. Fe-containing acireductone dioxygenase (Fe-ARD) produces formate and 2-keto-4-methylthiobutyrate (KMTB), the alpha-ketoacid precursor of methionine in the methionine recycle pathway. Ni-containing acireductone dioxygenase (Ni-ARD) produces methylthiopropionate, carbon monoxide and formate, and does not lie on the methionine recycle pathway. This chain is Acireductone dioxygenase, found in Prochlorococcus marinus (strain MIT 9313).